Reading from the N-terminus, the 921-residue chain is Short transient receptor potential channel 3 (921 aa).

Positions 1-73 are disordered; that stretch reads MSTKVRKCKE…PPFSHGPDLS (73 aa). Residues 1-459 lie on the Cytoplasmic side of the membrane; sequence MSTKVRKCKE…KILRSPFMKF (459 aa). Positions 19–31 are enriched in acidic residues; the sequence is PEEEEDEGEDEGA. 4 ANK repeats span residues 111–140, 146–175, 177–203, and 232–261; these read AEEERFLDAAEYGNIPVVRKMLEESKTLNV, MGQNALQLAVGNEHLEVTELLLKKENLARI, DALLLAISKGYVRIVEAILNHPGFAAS, and PDITPIILAAHCQKYEVVHMLLMKGARIER. Position 158 (glutamate 158) interacts with Ca(2+). Residues 460–477 form a helical membrane-spanning segment; the sequence is VAHAASFIIFLGLLVFNA. The Extracellular portion of the chain corresponds to 478 to 508; the sequence is SDRFEGITTLPNITVTDYPKQIFRVKTTQFT. N-linked (GlcNAc...) asparagine glycosylation is present at asparagine 489. Residues 509-527 traverse the membrane as a helical segment; that stretch reads WTEMLIMVWVLGMMWSECK. Ca(2+) contacts are provided by glutamate 525, glutamate 528, and asparagine 543. At 528–540 the chain is on the cytoplasmic side; sequence ELWLEGPREYILQ. Residues 541 to 562 traverse the membrane as a helical segment; the sequence is LWNVLDFGMLSIFIAAFTARFL. Residues 563-606 lie on the Extracellular side of the membrane; the sequence is AFLQATKAQQYVDSYVQESDLSEVTLPPEIQYFTYARDKWLPSD. Residues 607 to 630 form a helical membrane-spanning segment; the sequence is PQIISEGLYAIAVVLSFSRIAYIL. The Cytoplasmic segment spans residues 631–649; it reads PANESFGPLQISLGRTVKD. The stretch at 634 to 663 is one ANK 5 repeat; the sequence is ESFGPLQISLGRTVKDIFKFMVLFIMVFFA. Residues 650-673 form a helical membrane-spanning segment; sequence IFKFMVLFIMVFFAFMIGMFILYS. Residues 674–713 lie on the Extracellular side of the membrane; that stretch reads YYLGAKVNAAFTTVEESFKTLFWSIFGLSEVTSVVLKYDH. Residues 714 to 739 traverse the membrane as a helical segment; sequence KFIENIGYVLYGIYNVTMVVVLLNML. Residues 740–921 lie on the Cytoplasmic side of the membrane; sequence IAMINSSYQE…KLNPSMLRCE (182 aa). The interval 850–870 is binds to IP3R3; that stretch reads QIMKRLIKRYVLKAQVDKEND. Glutamate 871, glutamate 874, glutamate 876, and aspartate 883 together coordinate Ca(2+).

Belongs to the transient receptor (TC 1.A.4) family. STrpC subfamily. TRPC3 sub-subfamily. As to quaternary structure, homotetramer. Interacts with ITPR1. Interacts with ITPR3. Interacts with MX1. Interacts with RNF24. Interacts with JPH2; the interaction is involved in maintaining Ca(2+) homeostasis in skeletal muscle and is mediated by JPH2 'Ser-165' phosphorylation. Interacts with isoform short of TRPC1. Expressed predominantly in brain and at much lower levels in ovary, colon, small intestine, lung, prostate, placenta and testis.

Its subcellular location is the cell membrane. The enzyme catalyses Ca(2+)(in) = Ca(2+)(out). With respect to regulation, activated by diacylglycerol (DAG) in a membrane-delimited fashion, independently of protein kinase C. Activated by inositol 1,4,5-triphosphate receptors (ITPR) with bound IP3. May be activated by internal calcium store depletion. Inhibited by intracellular Ca(2+). Its function is as follows. Forms a receptor-activated non-selective calcium permeant cation channel. In terms of biological role, forms a receptor-activated non-selective calcium permeant cation channel. May be operated by a phosphatidylinositol second messenger system activated by receptor tyrosine kinases or G-protein coupled receptors. In Homo sapiens (Human), this protein is Short transient receptor potential channel 3 (TRPC3).